Reading from the N-terminus, the 156-residue chain is Ribonuclease pancreatic (156 aa).

The first 28 residues, 1–28 (MALEKSLVLLPLLVLILLVLGWVQPSLG), serve as a signal peptide directing secretion. The span at 33-43 (AKKFQRQHMDS) shows a compositional bias: basic and acidic residues. The disordered stretch occupies residues 33–52 (AKKFQRQHMDSDSSPSSNST). Residues K35 and R38 each coordinate substrate. H40 (proton acceptor) is an active-site residue. 2 N-linked (GlcNAc...) asparagine glycosylation sites follow: N50 and N62. 4 cysteine pairs are disulfide-bonded: C54–C112, C68–C123, C86–C138, and C93–C100. Substrate is bound by residues 69 to 73 (KPVNT) and K94. N104 carries an N-linked (GlcNAc...) asparagine glycan. Position 113 (R113) interacts with substrate. An N-linked (GlcNAc...) asparagine glycan is attached at N116. H147 (proton donor) is an active-site residue.

It belongs to the pancreatic ribonuclease family. In terms of assembly, monomer. Interacts with and forms tight 1:1 complexes with RNH1. Dimerization of two such complexes may occur. Interaction with RNH1 inhibits this protein.

The protein localises to the secreted. It catalyses the reaction an [RNA] containing cytidine + H2O = an [RNA]-3'-cytidine-3'-phosphate + a 5'-hydroxy-ribonucleotide-3'-[RNA].. The catalysed reaction is an [RNA] containing uridine + H2O = an [RNA]-3'-uridine-3'-phosphate + a 5'-hydroxy-ribonucleotide-3'-[RNA].. Endonuclease that catalyzes the cleavage of RNA on the 3' side of pyrimidine nucleotides. Acts on single-stranded and double-stranded RNA. This is Ribonuclease pancreatic (RNASE1) from Gorilla gorilla gorilla (Western lowland gorilla).